The primary structure comprises 80 residues: Defensin-like protein 276 (80 aa).

Residues Met-1–Ala-24 form the signal peptide. Disulfide bonds link Cys-27–Cys-67, Cys-33–Cys-55, Cys-39–Cys-65, and Cys-43–Cys-66.

This sequence belongs to the DEFL family.

Its subcellular location is the secreted. The chain is Defensin-like protein 276 from Arabidopsis thaliana (Mouse-ear cress).